Here is a 103-residue protein sequence, read N- to C-terminus: N(4)-acetylcytidine amidohydrolase (103 aa).

Positions 6–101 (ITFFQRFQDD…QTQFYVIEFK (96 aa)) constitute an ASCH domain. K21 acts as the Proton acceptor in catalysis. T24 acts as the Nucleophile in catalysis. E74 serves as the catalytic Proton donor.

Belongs to the N(4)-acetylcytidine amidohydrolase family.

The enzyme catalyses N(4)-acetylcytidine + H2O = cytidine + acetate + H(+). The catalysed reaction is N(4)-acetyl-2'-deoxycytidine + H2O = 2'-deoxycytidine + acetate + H(+). It catalyses the reaction N(4)-acetylcytosine + H2O = cytosine + acetate + H(+). Its function is as follows. Catalyzes the hydrolysis of N(4)-acetylcytidine (ac4C). This Escherichia coli O8 (strain IAI1) protein is N(4)-acetylcytidine amidohydrolase (yqfB).